Consider the following 164-residue polypeptide: Large ribosomal subunit protein uL10 (164 aa).

Belongs to the universal ribosomal protein uL10 family. In terms of assembly, part of the ribosomal stalk of the 50S ribosomal subunit. The N-terminus interacts with L11 and the large rRNA to form the base of the stalk. The C-terminus forms an elongated spine to which L12 dimers bind in a sequential fashion forming a multimeric L10(L12)X complex.

Its function is as follows. Forms part of the ribosomal stalk, playing a central role in the interaction of the ribosome with GTP-bound translation factors. The polypeptide is Large ribosomal subunit protein uL10 (Chromobacterium violaceum (strain ATCC 12472 / DSM 30191 / JCM 1249 / CCUG 213 / NBRC 12614 / NCIMB 9131 / NCTC 9757 / MK)).